Here is a 653-residue protein sequence, read N- to C-terminus: UvrABC system protein B (653 aa).

The Helicase ATP-binding domain maps to 25–182 (EGIERGVREQ…EKLVELQYKS (158 aa)). 38–45 (GVTGSGKT) contributes to the ATP binding site. The Beta-hairpin signature appears at 91-114 (YYDYYQPEAYIPHSDVYIEKDALI). A Helicase C-terminal domain is found at 429–591 (QIADVVNESQ…ITPKSISKSV (163 aa)). The 36-residue stretch at 616-651 (EEDIIKLQKEMLLHAENLEFEKALEIRNQINKLSQH) folds into the UVR domain.

The protein belongs to the UvrB family. In terms of assembly, forms a heterotetramer with UvrA during the search for lesions. Interacts with UvrC in an incision complex.

The protein resides in the cytoplasm. Its function is as follows. The UvrABC repair system catalyzes the recognition and processing of DNA lesions. A damage recognition complex composed of 2 UvrA and 2 UvrB subunits scans DNA for abnormalities. Upon binding of the UvrA(2)B(2) complex to a putative damaged site, the DNA wraps around one UvrB monomer. DNA wrap is dependent on ATP binding by UvrB and probably causes local melting of the DNA helix, facilitating insertion of UvrB beta-hairpin between the DNA strands. Then UvrB probes one DNA strand for the presence of a lesion. If a lesion is found the UvrA subunits dissociate and the UvrB-DNA preincision complex is formed. This complex is subsequently bound by UvrC and the second UvrB is released. If no lesion is found, the DNA wraps around the other UvrB subunit that will check the other stand for damage. The polypeptide is UvrABC system protein B (Anaplasma phagocytophilum (strain HZ)).